The chain runs to 329 residues: Small ribosomal subunit protein RACK1 (329 aa).

WD repeat units follow at residues 19 to 59 (GHNG…ATSP), 68 to 107 (GHSH…STRL), 110 to 149 (GHTQ…KFTL), 154 to 193 (AHQD…CNHT), 196 to 235 (DHTG…PLYK), 237 to 275 (EARN…VLAE), and 295 to 328 (PKAP…KSSS).

It belongs to the WD repeat G protein beta family. Ribosomal protein RACK1 subfamily.

The chain is Small ribosomal subunit protein RACK1 (gpbB) from Dictyostelium discoideum (Social amoeba).